A 112-amino-acid chain; its full sequence is Small ribosomal subunit protein bS6 (112 aa).

It belongs to the bacterial ribosomal protein bS6 family.

Functionally, binds together with bS18 to 16S ribosomal RNA. In Chlamydia trachomatis serovar L2 (strain ATCC VR-902B / DSM 19102 / 434/Bu), this protein is Small ribosomal subunit protein bS6.